The following is a 119-amino-acid chain: UPF0145 protein Ta0182 (119 aa).

The protein belongs to the UPF0145 family.

The chain is UPF0145 protein Ta0182 from Thermoplasma acidophilum (strain ATCC 25905 / DSM 1728 / JCM 9062 / NBRC 15155 / AMRC-C165).